Reading from the N-terminus, the 225-residue chain is UPF0758 protein NGK_1225 (225 aa).

The 123-residue stretch at 102 to 224 (TLSDPDTVAD…VRSFRQLGLM (123 aa)) folds into the MPN domain. Zn(2+) contacts are provided by H173, H175, and D186. A JAMM motif motif is present at residues 173 to 186 (HNHPGGSPEPSQED).

The protein belongs to the UPF0758 family.

The sequence is that of UPF0758 protein NGK_1225 from Neisseria gonorrhoeae (strain NCCP11945).